Reading from the N-terminus, the 215-residue chain is Peroxiredoxin 1 (215 aa).

The 157-residue stretch at 1-157 (MKLYQKFPET…LLRITKAALV (157 aa)) folds into the Thioredoxin domain. The active-site Cysteine sulfenic acid (-SOH) intermediate is the C45. R120 is a substrate binding site.

It belongs to the peroxiredoxin family. Prx6 subfamily. Homodecamer. Pentamer of dimers that assemble into a ring structure.

Its subcellular location is the cytoplasm. The enzyme catalyses a hydroperoxide + [thioredoxin]-dithiol = an alcohol + [thioredoxin]-disulfide + H2O. Thiol-specific peroxidase that catalyzes the reduction of hydrogen peroxide and organic hydroperoxides to water and alcohols, respectively. Plays a role in cell protection against oxidative stress by detoxifying peroxides. The sequence is that of Peroxiredoxin 1 from Sulfuracidifex metallicus (Sulfolobus metallicus).